A 312-amino-acid polypeptide reads, in one-letter code: MTQAAEHITVLLHEAVEGLAIKPDGIYVDGTFGRGGHSRLILQQLGPNGRLIAIDRDPQAIAEAAKIQDPRFEIVHGPFSGIASYLDERGLLGKVDGFLLDLGVSSPQLDDAERGFSFMKDGPLDMRMDPTSGQSAAEWLARADVDDIAWVLKTFGEERFAKKIARAIVHDRVTEPYVRTRQLAEMIARVNPSKEKGKHAATRSFQAIRIYINSELDEIETALNGALQVLAPEGRLSVISFHSLEDRLVKHFIRKHEKGPEVPHGIPLTEAQLAGGRKLKSVGKALKPSEHEVNENSRSRSSVLRVAQRLAE.

S-adenosyl-L-methionine contacts are provided by residues 35–37, Asp55, Phe79, Asp101, and Gln108; that span reads GGH. The tract at residues 286–306 is disordered; it reads LKPSEHEVNENSRSRSSVLRV. The segment covering 287–298 has biased composition (basic and acidic residues); sequence KPSEHEVNENSR.

Belongs to the methyltransferase superfamily. RsmH family.

Its subcellular location is the cytoplasm. The enzyme catalyses cytidine(1402) in 16S rRNA + S-adenosyl-L-methionine = N(4)-methylcytidine(1402) in 16S rRNA + S-adenosyl-L-homocysteine + H(+). Its function is as follows. Specifically methylates the N4 position of cytidine in position 1402 (C1402) of 16S rRNA. The sequence is that of Ribosomal RNA small subunit methyltransferase H from Aeromonas hydrophila subsp. hydrophila (strain ATCC 7966 / DSM 30187 / BCRC 13018 / CCUG 14551 / JCM 1027 / KCTC 2358 / NCIMB 9240 / NCTC 8049).